We begin with the raw amino-acid sequence, 123 residues long: Undecaprenol kinase (123 aa).

The Cytoplasmic segment spans residues 1 to 33 (MDSKDHRNELNRFFKSFVHAGRGIWETARTERN). A helical transmembrane segment spans residues 34–51 (FQFHAAAACAVLICGFLV). Residues 52–57 (ELSIIE) are Extracellular-facing. A helical transmembrane segment spans residues 58–74 (WMIIFLLIGGMFSLELL). The Cytoplasmic segment spans residues 75-99 (NTAIEHTVDLITDKHHPLAKAAKDA). Residues 100–120 (AAGAVCVFAVISCIIGLLIFL) traverse the membrane as a helical segment. Over 121–123 (PKL) the chain is Extracellular.

The protein belongs to the bacterial diacylglycerol kinase family.

The protein localises to the cell membrane. It catalyses the reaction di-trans,octa-cis-undecaprenol + ATP = di-trans,octa-cis-undecaprenyl phosphate + ADP + H(+). Its function is as follows. Catalyzes the phosphorylation of undecaprenol in vitro, which is probably the physiological substrate. Exhibits no detectable activity against other substrates such as monoacylglycerol, ceramide, or diacylglycerol (DAG). Appears indispensable for the maintenance of spore stability and viability in B.subtilis. The sequence is that of Undecaprenol kinase (dgkA) from Bacillus subtilis (strain 168).